We begin with the raw amino-acid sequence, 687 residues long: Polyphosphate kinase (687 aa).

Asparagine 45 contributes to the ATP binding site. Mg(2+) is bound by residues arginine 375 and arginine 405. Histidine 435 acts as the Phosphohistidine intermediate in catalysis. ATP is bound by residues tyrosine 472, arginine 568, and histidine 596.

It belongs to the polyphosphate kinase 1 (PPK1) family. Requires Mg(2+) as cofactor. In terms of processing, an intermediate of this reaction is the autophosphorylated ppk in which a phosphate is covalently linked to a histidine residue through a N-P bond.

The enzyme catalyses [phosphate](n) + ATP = [phosphate](n+1) + ADP. Its function is as follows. Catalyzes the reversible transfer of the terminal phosphate of ATP to form a long-chain polyphosphate (polyP). The protein is Polyphosphate kinase of Burkholderia lata (strain ATCC 17760 / DSM 23089 / LMG 22485 / NCIMB 9086 / R18194 / 383).